The sequence spans 283 residues: Nucleotide-binding protein Sama_3091 (283 aa).

8–15 is a binding site for ATP; sequence GRSGSGKS. GTP is bound at residue 56–59; it reads DIRN.

Belongs to the RapZ-like family.

Displays ATPase and GTPase activities. The sequence is that of Nucleotide-binding protein Sama_3091 from Shewanella amazonensis (strain ATCC BAA-1098 / SB2B).